The chain runs to 341 residues: MKALSKLKPAEGIWMTDVPEPEVGHNDLLIKIRKTAICGTDVHIYNWDEWSQKTIPVPMVVGHEYVGEVVGIGQEVKGFKIGDRVSGEGHITCGHCRNCRGGRTHLCRNTVGVGVNRPGCFAEYLVIPAFNAFKIPDNISDDLASIFDPFGNAVHTALSFDLVGEDVLVSGAGPIGIMAAAVAKHVGARNVVITDVNEYRLSLARKMGVTRAVNVANESLQDVMNELGMTEGFDVGLEMSGAPPAFRTMLDTMNHGGRIAMLGIPPSDMSIDWNKVIFKGLFIKGIYGREMFETWYKMAALIQSGLDLSPIITHRFTIDDFQKGFDAMRSGQSGKVILSWD.

Position 38 (Cys38) interacts with Zn(2+). Active-site charge relay system residues include Thr40 and His43. His63, Glu64, Cys93, Cys96, Cys99, and Cys107 together coordinate Zn(2+). Residues Ile175, Asp195, Arg200, 262–264 (LGI), and 286–287 (IY) contribute to the NAD(+) site.

This sequence belongs to the zinc-containing alcohol dehydrogenase family. Homotetramer. It depends on Zn(2+) as a cofactor.

It localises to the cytoplasm. The enzyme catalyses L-threonine + NAD(+) = (2S)-2-amino-3-oxobutanoate + NADH + H(+). The protein operates within amino-acid degradation; L-threonine degradation via oxydo-reductase pathway; glycine from L-threonine: step 1/2. In terms of biological role, catalyzes the NAD(+)-dependent oxidation of L-threonine to 2-amino-3-ketobutyrate. The polypeptide is L-threonine 3-dehydrogenase (Cronobacter sakazakii (strain ATCC BAA-894) (Enterobacter sakazakii)).